A 365-amino-acid polypeptide reads, in one-letter code: Class E basic helix-loop-helix protein 22 (365 aa).

Disordered regions lie at residues 34-93 (AFRS…GGGG), 134-156 (GRGS…DGRC), and 188-225 (HLHG…KEQK). The segment covering 82 to 93 (GGGGAGGGGGGG) has biased composition (gly residues). The span at 191-216 (GGAGLPPGGSTGSGGGGSGGGGGGGS) shows a compositional bias: gly residues. The region spanning 226–280 (ALRLNINARERRRMHDLNDALDELRAVIPYAHSPSVRKLSKIATLLLAKNYILMQ) is the bHLH domain.

In terms of assembly, heterodimer with other bHLH proteins, like TCF3/E47. In terms of tissue distribution, kidney, lung, brain and pancreas (insulinoma).

It localises to the nucleus. Its function is as follows. Inhibits DNA binding of TCF3/E47 homodimers and TCF3 (E47)/NEUROD1 heterodimers and acts as a strong repressor of Neurod1 and Myod-responsive genes, probably by heterodimerization with class a basic helix-loop-helix factors. Despite the presence of an intact basic domain, does not bind to DNA. The polypeptide is Class E basic helix-loop-helix protein 22 (BHLHE22) (Mesocricetus auratus (Golden hamster)).